A 52-amino-acid chain; its full sequence is Unknown protein from spot 415 of 2D-PAGE of etiolated coleoptile (52 aa).

This Zea mays (Maize) protein is Unknown protein from spot 415 of 2D-PAGE of etiolated coleoptile.